Consider the following 274-residue polypeptide: NADPH-dependent 7-cyano-7-deazaguanine reductase (274 aa).

A substrate-binding site is contributed by 80 to 82; the sequence is VES. An NADPH-binding site is contributed by 82–83; it reads SK. Residue Cys-181 is the Thioimide intermediate of the active site. The Proton donor role is filled by Asp-188. 220–221 provides a ligand contact to substrate; it reads HE. An NADPH-binding site is contributed by 249–250; that stretch reads RG.

It belongs to the GTP cyclohydrolase I family. QueF type 2 subfamily. As to quaternary structure, homodimer.

The protein localises to the cytoplasm. It carries out the reaction 7-aminomethyl-7-carbaguanine + 2 NADP(+) = 7-cyano-7-deazaguanine + 2 NADPH + 3 H(+). Its pathway is tRNA modification; tRNA-queuosine biosynthesis. In terms of biological role, catalyzes the NADPH-dependent reduction of 7-cyano-7-deazaguanine (preQ0) to 7-aminomethyl-7-deazaguanine (preQ1). The chain is NADPH-dependent 7-cyano-7-deazaguanine reductase from Burkholderia multivorans (strain ATCC 17616 / 249).